Consider the following 137-residue polypeptide: MSYGGSASQDIVTKLIRKIQNTSVSCTRRDENLDSFNQHLKMSLKVAHNTKTFAKHCLHRQVFKNTYRKRKAVEDQRKNLNTQLRQKFASPSDNLLSPCSRKLNDHKSKLFSAKSQPKTLEFVRGKQNIPRKPNVDI.

Functionally, component of the FEAR (CDC14 early anaphase release) network which promotes CDC14 release from the nucleolus during early anaphase and is required for the efficient segregation of telomeric and nucleolar regions. Although BNS1 can partially compensate for a lack of SPO12 function when overexpressed, it does not appear to play any role in controlling meiotic nuclear division. The chain is Protein BNS1 (BNS1) from Saccharomyces cerevisiae (strain ATCC 204508 / S288c) (Baker's yeast).